The chain runs to 266 residues: GTP cyclohydrolase MptA (266 aa).

This sequence belongs to the GTP cyclohydrolase IV family. In terms of assembly, homodimer. Fe(2+) is required as a cofactor.

The catalysed reaction is GTP + H2O = 7,8-dihydroneopterin 2',3'-cyclic phosphate + formate + diphosphate + H(+). The protein operates within cofactor biosynthesis; 5,6,7,8-tetrahydromethanopterin biosynthesis. Its function is as follows. Converts GTP to 7,8-dihydro-D-neopterin 2',3'-cyclic phosphate, the first intermediate in the biosynthesis of coenzyme methanopterin. This is GTP cyclohydrolase MptA from Pyrococcus abyssi (strain GE5 / Orsay).